Consider the following 76-residue polypeptide: DNA-directed RNA polymerase subunit omega (76 aa).

This sequence belongs to the RNA polymerase subunit omega family. As to quaternary structure, in cyanobacteria the RNAP catalytic core is composed of 2 alpha, 1 beta, 1 beta', 1 gamma and 1 omega subunit. When a sigma factor is associated with the core the holoenzyme is formed, which can initiate transcription.

The enzyme catalyses RNA(n) + a ribonucleoside 5'-triphosphate = RNA(n+1) + diphosphate. Promotes RNA polymerase assembly. Latches the N- and C-terminal regions of the beta' subunit thereby facilitating its interaction with the beta and alpha subunits. This is DNA-directed RNA polymerase subunit omega (rpoZ) from Synechocystis sp. (strain ATCC 27184 / PCC 6803 / Kazusa).